The primary structure comprises 389 residues: Glutamate 5-kinase (389 aa).

Position 26 (K26) interacts with ATP. Substrate is bound by residues S66, D153, and N167. 187–188 provides a ligand contact to ATP; sequence TD. Positions 293-371 constitute a PUA domain; that stretch reads AGTLFLDQGA…EQIEWILGHR (79 aa).

This sequence belongs to the glutamate 5-kinase family.

The protein resides in the cytoplasm. It carries out the reaction L-glutamate + ATP = L-glutamyl 5-phosphate + ADP. It participates in amino-acid biosynthesis; L-proline biosynthesis; L-glutamate 5-semialdehyde from L-glutamate: step 1/2. Functionally, catalyzes the transfer of a phosphate group to glutamate to form L-glutamate 5-phosphate. This is Glutamate 5-kinase from Rhodopirellula baltica (strain DSM 10527 / NCIMB 13988 / SH1).